Here is a 109-residue protein sequence, read N- to C-terminus: Large ribosomal subunit protein uL22 (109 aa).

Belongs to the universal ribosomal protein uL22 family. As to quaternary structure, part of the 50S ribosomal subunit.

This protein binds specifically to 23S rRNA; its binding is stimulated by other ribosomal proteins, e.g. L4, L17, and L20. It is important during the early stages of 50S assembly. It makes multiple contacts with different domains of the 23S rRNA in the assembled 50S subunit and ribosome. Its function is as follows. The globular domain of the protein is located near the polypeptide exit tunnel on the outside of the subunit, while an extended beta-hairpin is found that lines the wall of the exit tunnel in the center of the 70S ribosome. In Paraburkholderia xenovorans (strain LB400), this protein is Large ribosomal subunit protein uL22.